We begin with the raw amino-acid sequence, 172 residues long: Ribosome maturation factor RimM (172 aa).

Positions Asp96–Leu168 constitute a PRC barrel domain.

The protein belongs to the RimM family. Binds ribosomal protein uS19.

The protein localises to the cytoplasm. An accessory protein needed during the final step in the assembly of 30S ribosomal subunit, possibly for assembly of the head region. Essential for efficient processing of 16S rRNA. May be needed both before and after RbfA during the maturation of 16S rRNA. It has affinity for free ribosomal 30S subunits but not for 70S ribosomes. The polypeptide is Ribosome maturation factor RimM (Streptococcus agalactiae serotype Ia (strain ATCC 27591 / A909 / CDC SS700)).